A 191-amino-acid polypeptide reads, in one-letter code: Flavin reductase (NADH) (191 aa).

FAD is bound at residue 46 to 52 (YGLTCSA). Serine 55 lines the NAD(+) pocket. 72-73 (RV) is a binding site for FAD. Residues histidine 144 and 166 to 169 (YWRR) each bind NAD(+).

The protein belongs to the non-flavoprotein flavin reductase family.

It carries out the reaction a reduced flavin + NAD(+) = an oxidized flavin + NADH + 2 H(+). Catalyzes the reduction of flavin by NADH. Subsequently, the reduced flavins is transferred to the tetracycline 7-halogenase CtcP. The protein is Flavin reductase (NADH) of Kitasatospora aureofaciens (Streptomyces aureofaciens).